Consider the following 594-residue polypeptide: UvrABC system protein C (594 aa).

The GIY-YIG domain occupies 14 to 91 (DKPGCYLMKD…IKKHDPKYNV (78 aa)). The 36-residue stretch at 196 to 231 (SDIKEQLRERMEKAAEDLDFERAKELRDTIAQMEKV) folds into the UVR domain.

Belongs to the UvrC family. Interacts with UvrB in an incision complex.

The protein localises to the cytoplasm. In terms of biological role, the UvrABC repair system catalyzes the recognition and processing of DNA lesions. UvrC both incises the 5' and 3' sides of the lesion. The N-terminal half is responsible for the 3' incision and the C-terminal half is responsible for the 5' incision. The protein is UvrABC system protein C of Shouchella clausii (strain KSM-K16) (Alkalihalobacillus clausii).